The following is a 214-amino-acid chain: ATP phosphoribosyltransferase (214 aa).

This sequence belongs to the ATP phosphoribosyltransferase family. Short subfamily. As to quaternary structure, heteromultimer composed of HisG and HisZ subunits.

The protein resides in the cytoplasm. It carries out the reaction 1-(5-phospho-beta-D-ribosyl)-ATP + diphosphate = 5-phospho-alpha-D-ribose 1-diphosphate + ATP. The protein operates within amino-acid biosynthesis; L-histidine biosynthesis; L-histidine from 5-phospho-alpha-D-ribose 1-diphosphate: step 1/9. In terms of biological role, catalyzes the condensation of ATP and 5-phosphoribose 1-diphosphate to form N'-(5'-phosphoribosyl)-ATP (PR-ATP). Has a crucial role in the pathway because the rate of histidine biosynthesis seems to be controlled primarily by regulation of HisG enzymatic activity. The polypeptide is ATP phosphoribosyltransferase (Ruminiclostridium cellulolyticum (strain ATCC 35319 / DSM 5812 / JCM 6584 / H10) (Clostridium cellulolyticum)).